A 371-amino-acid chain; its full sequence is Putative F-box protein At1g58090 (371 aa).

In terms of domain architecture, F-box spans 1-46 (MVSKKLPLDLEEEILFRVPPRSLVRFRSVCREWNTLFKNKRFINKN).

The sequence is that of Putative F-box protein At1g58090 from Arabidopsis thaliana (Mouse-ear cress).